Reading from the N-terminus, the 332-residue chain is Ketol-acid reductoisomerase (NADP(+)) (332 aa).

One can recognise a KARI N-terminal Rossmann domain in the interval 2–182 (AKVYIDKDAS…GATRAGVIET (181 aa)). NADP(+)-binding positions include 25 to 28 (YGSQ), Ser53, and 83 to 86 (DMVQ). The active site involves His108. Gly134 is an NADP(+) binding site. One can recognise a KARI C-terminal knotted domain in the interval 183 to 328 (TFKEETETDL…RQIREISLRG (146 aa)). Mg(2+) contacts are provided by Asp191, Glu195, Glu227, and Glu231. Residue Ser252 participates in substrate binding.

It belongs to the ketol-acid reductoisomerase family. Mg(2+) serves as cofactor.

It catalyses the reaction (2R)-2,3-dihydroxy-3-methylbutanoate + NADP(+) = (2S)-2-acetolactate + NADPH + H(+). The enzyme catalyses (2R,3R)-2,3-dihydroxy-3-methylpentanoate + NADP(+) = (S)-2-ethyl-2-hydroxy-3-oxobutanoate + NADPH + H(+). Its pathway is amino-acid biosynthesis; L-isoleucine biosynthesis; L-isoleucine from 2-oxobutanoate: step 2/4. It participates in amino-acid biosynthesis; L-valine biosynthesis; L-valine from pyruvate: step 2/4. Functionally, involved in the biosynthesis of branched-chain amino acids (BCAA). Catalyzes an alkyl-migration followed by a ketol-acid reduction of (S)-2-acetolactate (S2AL) to yield (R)-2,3-dihydroxy-isovalerate. In the isomerase reaction, S2AL is rearranged via a Mg-dependent methyl migration to produce 3-hydroxy-3-methyl-2-ketobutyrate (HMKB). In the reductase reaction, this 2-ketoacid undergoes a metal-dependent reduction by NADPH to yield (R)-2,3-dihydroxy-isovalerate. The chain is Ketol-acid reductoisomerase (NADP(+)) from Sulfurisphaera tokodaii (strain DSM 16993 / JCM 10545 / NBRC 100140 / 7) (Sulfolobus tokodaii).